A 1147-amino-acid polypeptide reads, in one-letter code: Nitric oxide synthase, inducible (1147 aa).

The tract at residues 22–51 is disordered; sequence KDINNNVEKTPGAIPSPTTQDDPKSHKHQN. Residues 23 to 27 carry the DINNN-motif; mediates interaction with SPSB1, SPSB2 and SPSB4 motif; sequence DINNN. Residues Cys-107 and Cys-112 each contribute to the Zn(2+) site. Position 115 (Ser-115) interacts with (6R)-L-erythro-5,6,7,8-tetrahydrobiopterin. Cys-197 contributes to the heme b binding site. L-arginine is bound by residues Gln-260, Trp-369, Tyr-370, and Glu-374. Residues Arg-378, Ile-459, Trp-460, and Phe-473 each contribute to the (6R)-L-erythro-5,6,7,8-tetrahydrobiopterin site. Tyr-488 is a binding site for heme b. The segment at 512–532 is calmodulin-binding; that stretch reads FTVLVKAVFFASVLMRKVMAS. In terms of domain architecture, Flavodoxin-like spans 536–674; that stretch reads ATVLFATETG…AFRSWAVQTF (139 aa). Residues Thr-542, Glu-543, Thr-544, Lys-546, and Ser-547 each coordinate FMN. The residue at position 564 (Thr-564) is a Phosphothreonine. Tyr-572 bears the Phosphotyrosine mark. FMN is bound by residues Ser-588, Thr-589, Ser-625, Cys-632, Glu-658, and Gln-662. The FAD-binding FR-type domain maps to 727 to 967; that stretch reads KNVFTMRLKS…VRSVSGFQLP (241 aa). Arg-747 serves as a coordination point for NADP(+). FAD contacts are provided by His-769, Arg-903, Tyr-905, Ser-906, Thr-921, and Ala-923. Residue Thr-926 participates in NADP(+) binding. FAD-binding residues include Tyr-927, Val-940, Cys-941, and Ser-942. 8 residues coordinate NADP(+): Thr-981, Arg-1014, Ser-1043, Arg-1044, Lys-1050, Tyr-1052, Gln-1054, and Asp-1087.

This sequence belongs to the NOS family. As to quaternary structure, homodimer. Interacts with NHERF1. Interacts with GAPDH; induced by oxidatively-modified low-densitity lipoprotein (LDL(ox)). Interacts with S100A8 and S100A9 to form the iNOS-S100A8/9 transnitrosylase complex. Interacts with SPSB1, SPSB2 and SPSB4. Interacts with ELOC and CUL5 in the presence of SPSB1 or SPSB2 or SPSB4. Forms a complex with ASL, ASS1 and HSP90AA1; the complex regulates cell-autonomous L-arginine synthesis and citrulline recycling while channeling extracellular L-arginine to nitric oxide synthesis pathway. The cofactor is heme b. It depends on FAD as a cofactor. FMN serves as cofactor. Requires (6R)-L-erythro-5,6,7,8-tetrahydrobiopterin as cofactor. Polyubiquitinated; mediated by SPSB1, SPSB2 and SPSB4, leading to proteasomal degradation. In normal kidney, expressed primarily in the medullary thick ascending limb, with minor amounts in the medullary collecting duct and vasa recta bundle.

It localises to the cytoplasm. Its subcellular location is the cytosol. The enzyme catalyses 2 L-arginine + 3 NADPH + 4 O2 + H(+) = 2 L-citrulline + 2 nitric oxide + 3 NADP(+) + 4 H2O. Its activity is regulated as follows. Not stimulated by calcium/calmodulin. Aspirin inhibits expression and function of this enzyme and effects may be exerted at the level of translational/post-translational modification and directly on the catalytic activity. Produces nitric oxide (NO) which is a messenger molecule with diverse functions throughout the body. In macrophages, NO mediates tumoricidal and bactericidal actions. Also has nitrosylase activity and mediates cysteine S-nitrosylation of cytoplasmic target proteins such PTGS2/COX2. As component of the iNOS-S100A8/9 transnitrosylase complex involved in the selective inflammatory stimulus-dependent S-nitrosylation of GAPDH implicated in regulation of the GAIT complex activity and probably multiple targets including ANXA5, EZR, MSN and VIM. Involved in inflammation, enhances the synthesis of pro-inflammatory mediators such as IL6 and IL8. The protein is Nitric oxide synthase, inducible (Nos2) of Rattus norvegicus (Rat).